A 292-amino-acid polypeptide reads, in one-letter code: 31 kDa ribonucleoprotein, chloroplastic (292 aa).

The region spanning 88–166 is the RRM 1 domain; sequence LKLFVGNLPF…RAIRVNAGPA (79 aa). The tract at residues 165–203 is disordered; that stretch reads PAPAKRENSSFGGGRGGNSSYGGGRDGNSSFGGARGGRS. The linker (Gly-rich) stretch occupies residues 167–207; that stretch reads PAKRENSSFGGGRGGNSSYGGGRDGNSSFGGARGGRSVDSS. Residues 175–190 are compositionally biased toward gly residues; that stretch reads FGGGRGGNSSYGGGRD. One can recognise an RRM 2 domain in the interval 208–286; sequence NRVYVGNLSW…RSIRVSAAEE (79 aa).

Expressed at high levels in the leaves and seedlings, and lower levels are seen in the stems and roots.

The protein localises to the plastid. It is found in the chloroplast. The protein is 31 kDa ribonucleoprotein, chloroplastic of Nicotiana plumbaginifolia (Leadwort-leaved tobacco).